Reading from the N-terminus, the 117-residue chain is UPF0295 protein GK0479 (117 aa).

A run of 2 helical transmembrane segments spans residues 12 to 32 and 42 to 62; these read IRTF…LGLF and LFML…FWIG.

It belongs to the UPF0295 family.

Its subcellular location is the cell membrane. The chain is UPF0295 protein GK0479 from Geobacillus kaustophilus (strain HTA426).